The primary structure comprises 115 residues: Large ribosomal subunit protein bL20 (115 aa).

Belongs to the bacterial ribosomal protein bL20 family.

In terms of biological role, binds directly to 23S ribosomal RNA and is necessary for the in vitro assembly process of the 50S ribosomal subunit. It is not involved in the protein synthesizing functions of that subunit. The protein is Large ribosomal subunit protein bL20 of Microcystis aeruginosa (strain NIES-843 / IAM M-2473).